The following is a 552-amino-acid chain: AP-1-like transcription factor (552 aa).

Polar residues predominate over residues Met-1–Ile-14. Residues Met-1 to Asp-99 are disordered. Basic and acidic residues predominate over residues Pro-36–Ser-47. Residues Glu-48–Asp-61 are compositionally biased toward acidic residues. The segment covering Gly-62 to Ser-80 has biased composition (basic and acidic residues). Residues Gln-76–Leu-139 form the bZIP domain. Positions Lys-81–Ala-88 match the Nuclear localization signal motif. Residues Lys-81–Lys-102 form a basic motif region. The tract at residues Leu-104 to Leu-111 is leucine-zipper. Residues Gln-213 to Leu-244 are disordered. Residues Val-219–Leu-228 show a composition bias toward polar residues. Over residues Ser-229–Ser-240 the composition is skewed to low complexity. The tract at residues Cys-259–Cys-290 is n-CRD. Cystine bridges form between Cys-278-Cys-501 and Cys-285-Cys-532. Residues Ile-460 to Glu-489 are disordered. A c-CRD region spans residues Cys-501 to Cys-532. The Nuclear export signal signature appears at Glu-515–Ser-533.

The protein belongs to the bZIP family. YAP subfamily. Homodimer. The reduced form of pap1 interacts in the nucleus with the nuclear export protein crm1, and in the cytoplasm with the peroxiredoxin tpx1. In terms of processing, depending on the oxidative stress inducing agent, pap1 can undergo two distinct conformational changes, both masking the nuclear export signal, thus abolishing nuclear export by crm1/exportin 1. The glutathione-depleting agent diethylmaleate (DEM) leads to the non-reversible modification of at least 2 cysteine residues in the c-CRD. Peroxide stress induces the formation of a tpx1-dependent interdomain disulfide bond between Cys-278 and Cys-501.

It localises to the nucleus. The protein localises to the cytoplasm. Functionally, transcription activator involved in multidrug resistance, oxidative stress response, and redox homeostasis. Regulates the transcription of genes encoding antioxidant enzymes like catalase ctt1 and components of the cellular thiol-reducing pathways, including the thioredoxin system (trx2, trr1), ABC transporters involved in multidrug resistance like bfr1/hba2 and pmd1 as well as the gene obr1/apt1. Preferentially binds to promoters with the core binding site 5'-TTA[CG]TAA-3'. Activity of the transcription factor is controlled through oxidation of specific cysteine residues resulting in the alteration of its subcellular location. Oxidative stress induces nuclear accumulation and as a result pap1 transcriptional activity. Required for sty1/spc1-conferred staurosporine resistance. The sequence is that of AP-1-like transcription factor (pap1) from Schizosaccharomyces pombe (strain 972 / ATCC 24843) (Fission yeast).